The following is a 380-amino-acid chain: 3-isopropylmalate dehydratase large subunit (380 aa).

[4Fe-4S] cluster is bound by residues cysteine 262, cysteine 320, and cysteine 323.

This sequence belongs to the aconitase/IPM isomerase family. LeuC type 2 subfamily. In terms of assembly, heterodimer of LeuC and LeuD. [4Fe-4S] cluster serves as cofactor.

It carries out the reaction (2R,3S)-3-isopropylmalate = (2S)-2-isopropylmalate. It participates in amino-acid biosynthesis; L-leucine biosynthesis; L-leucine from 3-methyl-2-oxobutanoate: step 2/4. Catalyzes the isomerization between 2-isopropylmalate and 3-isopropylmalate, via the formation of 2-isopropylmaleate. This is 3-isopropylmalate dehydratase large subunit from Thermococcus kodakarensis (strain ATCC BAA-918 / JCM 12380 / KOD1) (Pyrococcus kodakaraensis (strain KOD1)).